Consider the following 121-residue polypeptide: Small ribosomal subunit protein uS13 (121 aa).

Positions histidine 91–lysine 121 are disordered. Residues alanine 106–lysine 121 show a composition bias toward basic residues.

The protein belongs to the universal ribosomal protein uS13 family. As to quaternary structure, part of the 30S ribosomal subunit. Forms a loose heterodimer with protein S19. Forms two bridges to the 50S subunit in the 70S ribosome.

Located at the top of the head of the 30S subunit, it contacts several helices of the 16S rRNA. In the 70S ribosome it contacts the 23S rRNA (bridge B1a) and protein L5 of the 50S subunit (bridge B1b), connecting the 2 subunits; these bridges are implicated in subunit movement. Contacts the tRNAs in the A and P-sites. The protein is Small ribosomal subunit protein uS13 of Lysinibacillus sphaericus (strain C3-41).